Consider the following 495-residue polypeptide: Cytochrome P450 710A1 (495 aa).

Residues 5 to 25 (VSIFASLAPYLISAFLLFLLV) traverse the membrane as a helical segment. Position 434 (Cys-434) interacts with heme.

It belongs to the cytochrome P450 family. Heme serves as cofactor. Expressed in the vascular tissues of roots, shoots and leaves. Expressed in root tips and sepals. Very low expression in stems and siliques.

Its subcellular location is the membrane. It carries out the reaction 5-dehydroepisterol + NADPH + O2 + H(+) = ergosta-5,7,22,24(28)-tetraen-3beta-ol + NADP(+) + 2 H2O. It functions in the pathway steroid biosynthesis; sterol biosynthesis. Its function is as follows. Required to form the C-22 double bond in the sterol side chain. Possesses in vitro C-22 desaturase activity toward beta-sitosterol and produces stigmasterol. No activity with campesterol. This Arabidopsis thaliana (Mouse-ear cress) protein is Cytochrome P450 710A1.